The chain runs to 776 residues: Ion-translocating oxidoreductase complex subunit C (776 aa).

2 consecutive 4Fe-4S ferredoxin-type domains span residues 368 to 397 and 407 to 436; these read MGAPQEEQHCIRCSACADACPADLLPQQLY and KATAHNLADCIECGACAYVCPSNIPLVQYF. Cys-377, Cys-380, Cys-383, Cys-387, Cys-416, Cys-419, Cys-422, and Cys-426 together coordinate [4Fe-4S] cluster. Composition is skewed to basic and acidic residues over residues 534–543, 597–611, 633–647, 669–683, and 705–719; these read ARARQAEKVQ, ADEKPAEPIDPRKAA, and ADEKPAEPIDPRKAT. A disordered region spans residues 534–754; that stretch reads ARARQAEKVQ…ENEAEDPRKA (221 aa). Over residues 721-743 the composition is skewed to low complexity; that stretch reads EAAIARAKARKAAQAGERAQAAN.

This sequence belongs to the 4Fe4S bacterial-type ferredoxin family. RnfC subfamily. In terms of assembly, the complex is composed of six subunits: RnfA, RnfB, RnfC, RnfD, RnfE and RnfG. It depends on [4Fe-4S] cluster as a cofactor.

It is found in the cell inner membrane. Functionally, part of a membrane-bound complex that couples electron transfer with translocation of ions across the membrane. The polypeptide is Ion-translocating oxidoreductase complex subunit C (Cronobacter sakazakii (strain ATCC BAA-894) (Enterobacter sakazakii)).